We begin with the raw amino-acid sequence, 311 residues long: Manganese-dependent ADP-ribose/CDP-alcohol diphosphatase (311 aa).

Asp17, Gln19, Asp64, Asn99, His218, His255, and His257 together coordinate Zn(2+).

The protein belongs to the ADPRibase-Mn family. As to quaternary structure, monomer. Mg(2+) serves as cofactor.

It catalyses the reaction CDP-choline + H2O = phosphocholine + CMP + 2 H(+). The enzyme catalyses ADP-D-ribose + H2O = D-ribose 5-phosphate + AMP + 2 H(+). It carries out the reaction CDP-glycerol + H2O = sn-glycerol 3-phosphate + CMP + 2 H(+). Hydrolyzes ADP-ribose, IDP-ribose, CDP-glycerol, CDP-choline and CDP-ethanolamine, but not other non-reducing ADP-sugars or CDP-glucose. The polypeptide is Manganese-dependent ADP-ribose/CDP-alcohol diphosphatase (Arabidopsis thaliana (Mouse-ear cress)).